Reading from the N-terminus, the 284-residue chain is NADH-cytochrome b5 reductase 1 (284 aa).

Residues 7–27 form a helical membrane-spanning segment; the sequence is KLVVVIVIVVVPLLFKFIIGP. In terms of domain architecture, FAD-binding FR-type spans 38–142; that stretch reads NDFQSFPLVE…KGPRGNYHYE (105 aa). FAD contacts are provided by residues 122–137 and 148–180; these read GELK…GPRG and HLGM…KVSL.

This sequence belongs to the flavoprotein pyridine nucleotide cytochrome reductase family. As to quaternary structure, monomer. Component of the 2-(3-amino-3-carboxypropyl)histidine synthase complex composed of DPH1, DPH2, KTI11/DPH3 and a NADH-dependent reductase, predominantly CBR1. Interacts with KTI11/DPH3. Interacts with STE20. The cofactor is FAD.

The protein localises to the mitochondrion outer membrane. The enzyme catalyses 2 Fe(III)-[cytochrome b5] + NADH = 2 Fe(II)-[cytochrome b5] + NAD(+) + H(+). It catalyses the reaction 2 Fe(3+)-[Dph3] + NADH = 2 Fe(2+)-[Dph3] + NAD(+) + H(+). The protein operates within protein modification; peptidyl-diphthamide biosynthesis. With respect to regulation, competitively inhibited by NAD(+). Inhibited by mercurials such as p-chloromercuribenzoate (PCMB) and HgCl(2). Enzymatic activity increases under anaerobic conditions. Functionally, NADH-dependent reductase for KTI11/DPH3 and cytochrome b5. Required for the first step of diphthamide biosynthesis, a post-translational modification of histidine which occurs in elongation factor 2. DPH1 and DPH2 transfer a 3-amino-3-carboxypropyl (ACP) group from S-adenosyl-L-methionine (SAM) to a histidine residue, the reaction is assisted by a reduction system comprising KTI11/DPH3 and a NADH-dependent reductase, predominantly CBR1. By reducing KTI11/DPH3, also involved in the formation of the tRNA wobble base modification mcm5s 2U (5-methoxycarbonylmethyl-2-thiouridine), mediated by the elongator complex. The cytochrome b5/NADH cytochrome b5 reductase electron transfer system supports the catalytic activity of several sterol biosynthetic enzymes. Plays a role in bud morphology. The chain is NADH-cytochrome b5 reductase 1 (CBR1) from Saccharomyces cerevisiae (strain ATCC 204508 / S288c) (Baker's yeast).